A 584-amino-acid chain; its full sequence is Long-chain-fatty-acid--AMP ligase FadD23 (584 aa).

2 consecutive transmembrane segments (helical) span residues 199-219 (YFAD…WLPF) and 225-245 (LVLG…TSPV).

The protein belongs to the ATP-dependent AMP-binding enzyme family.

Its subcellular location is the membrane. It catalyses the reaction holo-[(hydroxy)phthioceranic acid synthase] + hexadecanoate + ATP = hexadecanoyl-[(hydroxy)phthioceranic acid synthase] + AMP + diphosphate. The catalysed reaction is holo-[(hydroxy)phthioceranic acid synthase] + octadecanoate + ATP = octadecanoyl-[(hydroxy)phthioceranic acid synthase] + AMP + diphosphate. Its pathway is lipid metabolism; fatty acid biosynthesis. Catalyzes the activation of long-chain fatty acids as acyl-adenylates (acyl-AMP), which are then transferred to the multifunctional polyketide synthase (PKS) type III for further chain extension. Involved in the biosynthesis of sulfolipid 1 (SL-1). This is Long-chain-fatty-acid--AMP ligase FadD23 (fadD23) from Mycobacterium bovis (strain ATCC BAA-935 / AF2122/97).